A 398-amino-acid chain; its full sequence is S-adenosylmethionine synthase (398 aa).

Histidine 26 lines the ATP pocket. Mg(2+) is bound at residue aspartate 28. Glutamate 54 serves as a coordination point for K(+). L-methionine-binding residues include glutamate 67 and glutamine 110. The interval 110-120 (QSPDIAQGVNE) is flexible loop. ATP-binding positions include 177 to 179 (DAK), 243 to 244 (RF), aspartate 252, 258 to 259 (RK), alanine 275, and lysine 279. Aspartate 252 lines the L-methionine pocket. Lysine 283 lines the L-methionine pocket.

This sequence belongs to the AdoMet synthase family. Homotetramer; dimer of dimers. Mg(2+) serves as cofactor. K(+) is required as a cofactor.

Its subcellular location is the cytoplasm. The catalysed reaction is L-methionine + ATP + H2O = S-adenosyl-L-methionine + phosphate + diphosphate. Its pathway is amino-acid biosynthesis; S-adenosyl-L-methionine biosynthesis; S-adenosyl-L-methionine from L-methionine: step 1/1. Functionally, catalyzes the formation of S-adenosylmethionine (AdoMet) from methionine and ATP. The overall synthetic reaction is composed of two sequential steps, AdoMet formation and the subsequent tripolyphosphate hydrolysis which occurs prior to release of AdoMet from the enzyme. The sequence is that of S-adenosylmethionine synthase from Desulfotalea psychrophila (strain LSv54 / DSM 12343).